We begin with the raw amino-acid sequence, 109 residues long: Oncomodulin (109 aa).

An N-acetylserine modification is found at serine 2. EF-hand domains are found at residues 39-74 (MSASQLKDIFQFIDNDQSGYLDEDELKYFLQRFQSD) and 78-109 (LTESETKSLMDAADNDGDGKIGADEFQEMVHS). Aspartate 52, aspartate 54, serine 56, tyrosine 58, glutamate 63, aspartate 91, aspartate 93, aspartate 95, lysine 97, and glutamate 102 together coordinate Ca(2+). Residues 82-109 (ETKSLMDAADNDGDGKIGADEFQEMVHS) form a disordered region. Residues 94–109 (GDGKIGADEFQEMVHS) show a composition bias toward basic and acidic residues.

This sequence belongs to the parvalbumin family. As to expression, found in tumor tissues and not detected in normal tissues.

In terms of biological role, has some calmodulin-like activity with respect to enzyme activation and growth regulation. Binds two calcium ions. The protein is Oncomodulin (Ocm) of Mus musculus (Mouse).